The primary structure comprises 508 residues: Photosystem II CP47 reaction center protein (508 aa).

6 helical membrane-spanning segments follow: residues 21–36, 101–115, 140–156, 203–218, 237–252, and 457–472; these read SVHI…WAGS, IVFS…IWHW, GIHL…FGAF, IAAG…FHLS, VLSS…AFVV, and SFAL…HGAR.

The protein belongs to the PsbB/PsbC family. PsbB subfamily. PSII is composed of 1 copy each of membrane proteins PsbA, PsbB, PsbC, PsbD, PsbE, PsbF, PsbH, PsbI, PsbJ, PsbK, PsbL, PsbM, PsbT, PsbX, PsbY, PsbZ, Psb30/Ycf12, at least 3 peripheral proteins of the oxygen-evolving complex and a large number of cofactors. It forms dimeric complexes. Binds multiple chlorophylls. PSII binds additional chlorophylls, carotenoids and specific lipids. serves as cofactor.

The protein resides in the plastid. Its subcellular location is the chloroplast thylakoid membrane. In terms of biological role, one of the components of the core complex of photosystem II (PSII). It binds chlorophyll and helps catalyze the primary light-induced photochemical processes of PSII. PSII is a light-driven water:plastoquinone oxidoreductase, using light energy to abstract electrons from H(2)O, generating O(2) and a proton gradient subsequently used for ATP formation. The polypeptide is Photosystem II CP47 reaction center protein (Carica papaya (Papaya)).